The primary structure comprises 511 residues: MTTHNDDAAASLPIDENKIIAERRAKLSALREQGIAFPNDFRPQHKAADLQEKYGSKTREELEAEPVTVVLAGRMMLKREAGKKAAFATLQDASGSKADGRIQIYVTLNLTGEAAMAALHHYDLGDILGVSGTLFKTKTDELTIKVSELRLITKSLRPLPDKFHGLADQETKYRQRYVDLIMNEDTRRTFKARTAAISSIRRFMERNDFMEVETPMLHTIPGGAAAKPFTTHHNALDMEMFLRIAPELYLKRLVVGGFDRVFEINRNFRNEGVSIRHNPEFTMMEFYAAYTDYKWLMDFTEAVIRQAAIDAHGTATLTYGGRELDLAKPFHRLTIVGAINKFAPQYTHEQLHDAEYIKAELKKFGVKPHAHSGLGALQLALFEETAEAQLWEPTYIIDYPVEVSPLARASDTVAGITERFELFMVGREIANGFSELNDAEDQAARFQAQVAAKDAGDEEAMYYDADYIRALEYGMPPTGGCGIGIDRLMMIITDSPNIRDVLLFPHLRRED.

Mg(2+)-binding residues include glutamate 421 and glutamate 428.

It belongs to the class-II aminoacyl-tRNA synthetase family. As to quaternary structure, homodimer. Mg(2+) serves as cofactor.

It localises to the cytoplasm. It catalyses the reaction tRNA(Lys) + L-lysine + ATP = L-lysyl-tRNA(Lys) + AMP + diphosphate. In Herminiimonas arsenicoxydans, this protein is Lysine--tRNA ligase.